Reading from the N-terminus, the 315-residue chain is Acetaldehyde dehydrogenase 1 (315 aa).

NAD(+) is bound at residue S12–I15. C132 acts as the Acyl-thioester intermediate in catalysis. Residues S163–N171 and N291 contribute to the NAD(+) site.

The protein belongs to the acetaldehyde dehydrogenase family.

The catalysed reaction is acetaldehyde + NAD(+) + CoA = acetyl-CoA + NADH + H(+). This chain is Acetaldehyde dehydrogenase 1, found in Paraburkholderia phymatum (strain DSM 17167 / CIP 108236 / LMG 21445 / STM815) (Burkholderia phymatum).